Consider the following 333-residue polypeptide: Cytochrome f (333 aa).

The N-terminal stretch at 1–16 (MRNVFRTARLTRSARA) is a signal peptide. A helical membrane pass occupies residues 17 to 36 (IVKTLLIAIATVTFYFTSDL). Residues Tyr-45, Cys-66, Cys-69, and His-70 each contribute to the heme site. The chain crosses the membrane as a helical span at residues 299–319 (VKWMIAFVALVMLAQVMLVLK).

It belongs to the cytochrome f family. In terms of assembly, the 4 large subunits of the cytochrome b6-f complex are cytochrome b6, subunit IV (17 kDa polypeptide, PetD), cytochrome f and the Rieske protein, while the 4 small subunits are PetG, PetL, PetM and PetN. The complex functions as a dimer. Heme is required as a cofactor.

The protein resides in the cellular thylakoid membrane. Its function is as follows. Component of the cytochrome b6-f complex, which mediates electron transfer between photosystem II (PSII) and photosystem I (PSI), cyclic electron flow around PSI, and state transitions. This chain is Cytochrome f, found in Nostoc punctiforme (strain ATCC 29133 / PCC 73102).